Consider the following 356-residue polypeptide: Iron-regulated protein A (356 aa).

Residues 1-44 (MIVTGSQVRQGLNTWFVLPLRRTAIGLGCAGVATLFSACGQTQA) form the signal peptide. Hydrophilic stretches follow at residues 75–145 (QALQ…EQRE) and 240–310 (GGPL…ATAR).

The iron-regulated protein A is one unit of the protein complex CPVI-4, which is synthesized under iron deficient conditions.

Its subcellular location is the cell inner membrane. Functionally, irpA occurs under iron-deficient growth conditions in cyanobacterium Synechococcus and disappears in cells recovering from iron starvation. It seems to be involved in iron acquisition, uptake or storage. This is Iron-regulated protein A (irpA) from Synechococcus elongatus (strain ATCC 33912 / PCC 7942 / FACHB-805) (Anacystis nidulans R2).